The primary structure comprises 734 residues: MNTSLRLNHYWITCADGLETLLQEEIEQLGTKVTERKAGRLIIEGTLEHAYRICMWSRLASRVLLPIHTYELERTHDARDVAEELYEGAISFDWSLIFAPQSTFAIRLHAEREIKVNTQFATLRVKDGVVDSFMEAVGRRPSIDTKQPEITLYVLAGKTEHTYCLDLSGDSLHKRGYRRFMTDAPIKENLAAAILQKAKLQERNPEIVLDPMCGSGTFIIEALMILTDRAPGLVRRFGFNGWHGHDRELWLSLKAEAAERHEKALEQPLPKFYAYDADWEAVKATRENIIAAGFEKLLGDIQIEERTLADWPDFGAENKTAFIVTNPPYGERLGDKASNRSLYLGLSALLQKNFPNQYAAIIAAQIEQADVLAFEAPETLRLMNGKLPIYVRFGTVKPEKVTQPFLANWQAQPVEMEEAQDFANRLQKNMTALKKWATKENIYCLRLYDADLPDFNLAVDLYGDRLHVQEYAPPKKIDPEKAKKRFNLALAAIRAVTGLNRDAIFIKTRARQTGTNQYTKQSTANKRFIVQEGKAKILVNLTDYLDTGLFLDHRQMRLRIAQEARGKHFLNLYSYTSTASLHAALGGAASTTSVDLSNTYLSWSKENFVLNGLTVDHADEQHMFFASDCFEWLKEGHEQYDLIFIDPPTFSNSKKFHGTFDVQRDHVSLIKRAMNRLTSEGTLYFSNNYRGFEMDEEIEALYDVEEITSETIGPDFKRNQKIHRAWKIQHPGLN.

The region spanning H49–L167 is the THUMP domain.

The protein belongs to the methyltransferase superfamily. RlmKL family.

It is found in the cytoplasm. It carries out the reaction guanosine(2445) in 23S rRNA + S-adenosyl-L-methionine = N(2)-methylguanosine(2445) in 23S rRNA + S-adenosyl-L-homocysteine + H(+). The catalysed reaction is guanosine(2069) in 23S rRNA + S-adenosyl-L-methionine = N(2)-methylguanosine(2069) in 23S rRNA + S-adenosyl-L-homocysteine + H(+). Functionally, specifically methylates the guanine in position 2445 (m2G2445) and the guanine in position 2069 (m7G2069) of 23S rRNA. The polypeptide is Ribosomal RNA large subunit methyltransferase K/L (Acinetobacter baumannii (strain AYE)).